We begin with the raw amino-acid sequence, 134 residues long: Cytochrome c-550 (134 aa).

Gln1 is subject to Pyrrolidone carboxylic acid. Heme c is bound by residues Cys15, Cys18, His19, and Met100.

In terms of processing, binds 1 heme c group covalently per subunit.

Functionally, electron donor for nitrous-oxide reductase. The chain is Cytochrome c-550 from Paracoccus pantotrophus (Thiosphaera pantotropha).